Reading from the N-terminus, the 395-residue chain is Acetate kinase (395 aa).

Asn7 contacts Mg(2+). Position 14 (Lys14) interacts with ATP. Arg92 contributes to the substrate binding site. Asp149 acts as the Proton donor/acceptor in catalysis. ATP-binding positions include 207–211, 282–284, and 329–333; these read HLGNG, DMR, and GIGEN. Position 382 (Glu382) interacts with Mg(2+).

The protein belongs to the acetokinase family. Homodimer. The cofactor is Mg(2+). Mn(2+) serves as cofactor.

It is found in the cytoplasm. The enzyme catalyses acetate + ATP = acetyl phosphate + ADP. It participates in metabolic intermediate biosynthesis; acetyl-CoA biosynthesis; acetyl-CoA from acetate: step 1/2. Its function is as follows. Catalyzes the formation of acetyl phosphate from acetate and ATP. Can also catalyze the reverse reaction. The protein is Acetate kinase of Brachyspira hyodysenteriae (strain ATCC 49526 / WA1).